A 135-amino-acid chain; its full sequence is U-scoloptoxin(22)-Er1a (135 aa).

A signal peptide spans 1–24 (MAVILKHLAIILLVFVIEIKMGQG). The segment at 61-135 (PQITFSTDWG…RSPRYLPTII (75 aa)) is disordered. Positions 75–127 (SVNEDREAAERERSPQMKRSEHEEQLMAKDEMKRFQEERNPSSDDKIAIDKRS) are enriched in basic and acidic residues.

Belongs to the scoloptoxin-22 family. Expressed by the venom gland.

The protein localises to the secreted. The protein is U-scoloptoxin(22)-Er1a of Ethmostigmus rubripes (Giant centipede).